Here is a 258-residue protein sequence, read N- to C-terminus: Putative phosphoenolpyruvate synthase regulatory protein (258 aa).

146–153 (GVSRVGKT) contributes to the ADP binding site.

Belongs to the pyruvate, phosphate/water dikinase regulatory protein family. PSRP subfamily.

It catalyses the reaction [pyruvate, water dikinase] + ADP = [pyruvate, water dikinase]-phosphate + AMP + H(+). The catalysed reaction is [pyruvate, water dikinase]-phosphate + phosphate + H(+) = [pyruvate, water dikinase] + diphosphate. Bifunctional serine/threonine kinase and phosphorylase involved in the regulation of the phosphoenolpyruvate synthase (PEPS) by catalyzing its phosphorylation/dephosphorylation. The protein is Putative phosphoenolpyruvate synthase regulatory protein of Thiobacillus denitrificans (strain ATCC 25259 / T1).